Consider the following 396-residue polypeptide: Phosphoglycerate kinase (396 aa).

Residues 21 to 23 (DFN), Arg36, 59 to 62 (HLGK), Arg119, and Arg156 each bind substrate. ATP-binding positions include Lys206, Glu325, and 352–355 (GGDS).

The protein belongs to the phosphoglycerate kinase family. As to quaternary structure, monomer.

It is found in the cytoplasm. It catalyses the reaction (2R)-3-phosphoglycerate + ATP = (2R)-3-phospho-glyceroyl phosphate + ADP. The protein operates within carbohydrate degradation; glycolysis; pyruvate from D-glyceraldehyde 3-phosphate: step 2/5. This is Phosphoglycerate kinase from Staphylococcus carnosus (strain TM300).